We begin with the raw amino-acid sequence, 599 residues long: Pentatricopeptide repeat-containing protein At3g62470, mitochondrial (599 aa).

The N-terminal 99 residues, 1–99 (MAAAPWLHLS…RGFSSGSSNV (99 aa)), are a transit peptide targeting the mitochondrion. 10 PPR repeats span residues 194 to 228 (DSRT…GLLT), 230 to 262 (ETFT…KFKI), 263 to 293 (GVET…LKER), 297 to 331 (NMMT…GLKP), 332 to 366 (DIVA…GPCP), 367 to 401 (NVRS…GLQP), 402 to 436 (DAAV…GHPP), 437 to 471 (DGKT…EIEP), 472 to 506 (SIHT…GICP), and 507 to 541 (DDNS…GMKT).

The protein belongs to the PPR family. P subfamily.

It is found in the mitochondrion. This Arabidopsis thaliana (Mouse-ear cress) protein is Pentatricopeptide repeat-containing protein At3g62470, mitochondrial.